The sequence spans 291 residues: Popeye domain-containing protein 3 (291 aa).

N-linked (GlcNAc...) asparagine glycosylation is present at N4. Transmembrane regions (helical) follow at residues 27–44, 48–70, and 77–99; these read GAIY…FMGG, FGLL…WAWV, and IFSW…AYQV.

It belongs to the popeye family. Expressed predominantly in skeletal muscle (at protein level). Also detected in heart.

It localises to the membrane. May play a role in the maintenance of heart function mediated, at least in part, through cAMP-binding. May play a role in the regulation of KCNK2/TREK-1-mediated current amplitude. This Homo sapiens (Human) protein is Popeye domain-containing protein 3 (POPDC3).